Reading from the N-terminus, the 534-residue chain is Glucans biosynthesis protein D (534 aa).

Residues 1-26 constitute a signal peptide (tat-type signal); it reads MQRRDFIRNASLALAAFGLPSLPACA.

The protein belongs to the OpgD/OpgG family. Post-translationally, predicted to be exported by the Tat system. The position of the signal peptide cleavage has not been experimentally proven.

Its subcellular location is the periplasm. The protein operates within glycan metabolism; osmoregulated periplasmic glucan (OPG) biosynthesis. In terms of biological role, probably involved in the control of the structural glucose backbone of osmoregulated periplasmic glucans (OPGs). The sequence is that of Glucans biosynthesis protein D from Stenotrophomonas maltophilia (strain R551-3).